Reading from the N-terminus, the 1382-residue chain is Histone-lysine N-methyltransferase SUVR5 (1382 aa).

Disordered regions lie at residues 43-62 (TVTG…SEPK) and 354-373 (GNTN…NTPE). C2H2-type zinc fingers lie at residues 735 to 758 (FACA…EERH), 769 to 792 (LQCI…QAVH), and 838 to 861 (FVCK…QAEH). The tract at residues 915 to 935 (RRMQGSKSLGTEGNTEAGVSP) is disordered. The segment covering 919 to 928 (GSKSLGTEGN) has biased composition (polar residues). A Pre-SET domain is found at 1145–1221 (LRCSCRSSVC…TCQNRVLQNG (77 aa)). 9 residues coordinate Zn(2+): C1147, C1149, C1154, C1159, C1182, C1203, C1207, C1209, and C1213. Residues 1224 to 1356 (AKLEVFRTES…AGEEITRDYG (133 aa)) form the SET domain. S-adenosyl-L-methionine contacts are provided by residues 1234-1236 (KGW), Y1277, and 1313-1314 (NH). Residue C1316 participates in Zn(2+) binding. An S-adenosyl-L-methionine-binding site is contributed by Y1355. One can recognise a Post-SET domain in the interval 1366 to 1382 (NEHPCHCKATNCRGLLS). Zn(2+) contacts are provided by C1370, C1372, and C1377.

It belongs to the class V-like SAM-binding methyltransferase superfamily. Component of a regulatory complex with LDL1/SWP1. Interacts with LDL1/SWP1.

The protein localises to the nucleus. The protein resides in the chromosome. It catalyses the reaction L-lysyl-[histone] + S-adenosyl-L-methionine = N(6)-methyl-L-lysyl-[histone] + S-adenosyl-L-homocysteine + H(+). In terms of biological role, histone methyltransferase that functions together with its binding partner LDL1/SWP1 as one of the regulators of flower timing in Arabidopsis. Mediates H3K9me2 deposition and regulates gene expression in a DNA methylation-independent manner. Binds DNA through its zinc fingers and represses the expression of a subset of stimulus response genes. May represent a novel mechanism for plants to regulate their chromatin and transcriptional state, which may allow for the adaptability and modulation necessary to rapidly respond to environment or developmental cues. The polypeptide is Histone-lysine N-methyltransferase SUVR5 (Arabidopsis thaliana (Mouse-ear cress)).